Consider the following 309-residue polypeptide: Aspartate carbamoyltransferase catalytic subunit (309 aa).

Carbamoyl phosphate is bound by residues Arg-55 and Thr-56. Lys-85 contacts L-aspartate. Arg-106, His-135, and Gln-138 together coordinate carbamoyl phosphate. L-aspartate-binding residues include Arg-168 and Arg-230. Carbamoyl phosphate contacts are provided by Leu-268 and Pro-269.

The protein belongs to the aspartate/ornithine carbamoyltransferase superfamily. ATCase family. As to quaternary structure, heterododecamer (2C3:3R2) of six catalytic PyrB chains organized as two trimers (C3), and six regulatory PyrI chains organized as three dimers (R2).

The enzyme catalyses carbamoyl phosphate + L-aspartate = N-carbamoyl-L-aspartate + phosphate + H(+). Its pathway is pyrimidine metabolism; UMP biosynthesis via de novo pathway; (S)-dihydroorotate from bicarbonate: step 2/3. Functionally, catalyzes the condensation of carbamoyl phosphate and aspartate to form carbamoyl aspartate and inorganic phosphate, the committed step in the de novo pyrimidine nucleotide biosynthesis pathway. The protein is Aspartate carbamoyltransferase catalytic subunit of Wigglesworthia glossinidia brevipalpis.